A 161-amino-acid polypeptide reads, in one-letter code: 2-C-methyl-D-erythritol 2,4-cyclodiphosphate synthase (161 aa).

2 residues coordinate a divalent metal cation: Asp-10 and His-12. 4-CDP-2-C-methyl-D-erythritol 2-phosphate contacts are provided by residues 10-12 (DVH) and 36-37 (HS). Position 44 (His-44) interacts with a divalent metal cation. Residues 58–60 (DIG), 63–67 (FPDTD), 102–108 (AQAPKML), 134–137 (TTTE), Phe-141, and Arg-144 contribute to the 4-CDP-2-C-methyl-D-erythritol 2-phosphate site.

Belongs to the IspF family. In terms of assembly, homotrimer. The cofactor is a divalent metal cation.

It carries out the reaction 4-CDP-2-C-methyl-D-erythritol 2-phosphate = 2-C-methyl-D-erythritol 2,4-cyclic diphosphate + CMP. It functions in the pathway isoprenoid biosynthesis; isopentenyl diphosphate biosynthesis via DXP pathway; isopentenyl diphosphate from 1-deoxy-D-xylulose 5-phosphate: step 4/6. In terms of biological role, involved in the biosynthesis of isopentenyl diphosphate (IPP) and dimethylallyl diphosphate (DMAPP), two major building blocks of isoprenoid compounds. Catalyzes the conversion of 4-diphosphocytidyl-2-C-methyl-D-erythritol 2-phosphate (CDP-ME2P) to 2-C-methyl-D-erythritol 2,4-cyclodiphosphate (ME-CPP) with a corresponding release of cytidine 5-monophosphate (CMP). The chain is 2-C-methyl-D-erythritol 2,4-cyclodiphosphate synthase from Shewanella loihica (strain ATCC BAA-1088 / PV-4).